The sequence spans 256 residues: MASISSFGCFPQSTALAGTSSTTRCRTTVAARLADQSDDFAPLRSSGGNCGCVNNSGEFDRRKLLVSSVGLLIGALSYDSKDGDFASASQFADMPALKGKDYGKTKMKYPDYTETQSGLQYKDLRVGTGPIAKKGDKVVVDWDGYTIGYYGRIFEARNKTKGGSFEGDDKEFFKFTLGSNEVIPAFEEAVSGMALGGIRRIIVPPELGYPDNDYNKSGPRPMTFSGQRALDFVLRNQGLIDKTLLFDVELLKIVPN.

Residues 1–29 (MASISSFGCFPQSTALAGTSSTTRCRTTV) constitute a chloroplast transit peptide. Residues 30 to 88 (AARLADQSDDFAPLRSSGGNCGCVNNSGEFDRRKLLVSSVGLLIGALSYDSKDGDFASA) constitute a thylakoid transit peptide. Residues 135 to 254 (GDKVVVDWDG…LFDVELLKIV (120 aa)) enclose the PPIase FKBP-type domain. A Phosphoserine modification is found at Ser-164.

Belongs to the FKBP-type PPIase family.

Its subcellular location is the plastid. The protein localises to the chloroplast thylakoid lumen. It carries out the reaction [protein]-peptidylproline (omega=180) = [protein]-peptidylproline (omega=0). Functionally, PPIases accelerate the folding of proteins. It catalyzes the cis-trans isomerization of proline imidic peptide bonds in oligopeptides. This Arabidopsis thaliana (Mouse-ear cress) protein is Peptidyl-prolyl cis-trans isomerase FKBP19, chloroplastic (FKBP19).